We begin with the raw amino-acid sequence, 417 residues long: Glucose-1-phosphatase (417 aa).

The first 23 residues, 1–23 (MKYKVLTLCLSAALFAPIAPTMA), serve as a signal peptide directing secretion. Position 41 (arginine 41) interacts with substrate. The active-site Nucleophile is the histidine 42. Substrate contacts are provided by arginine 45, arginine 118, and glutamate 220. Aspartate 315 functions as the Proton donor in the catalytic mechanism.

Belongs to the histidine acid phosphatase family. As to quaternary structure, homodimer.

The protein localises to the periplasm. It catalyses the reaction alpha-D-glucose 1-phosphate + H2O = D-glucose + phosphate. In Providencia rettgeri, this protein is Glucose-1-phosphatase (agp).